Here is a 313-residue protein sequence, read N- to C-terminus: 18S rRNA aminocarboxypropyltransferase (313 aa).

A disordered region spans residues 1–30; that stretch reads MGKGKNKMHEPKNGRPQRGANGHSSRQNHR. Residues Ser-62, Val-110, Leu-133, and Trp-148 each contribute to the S-adenosyl-L-methionine site. Basic and acidic residues predominate over residues 215-228; it reads KETQERKSRAKEED. The segment at 215–313 is disordered; the sequence is KETQERKSRA…SYDPLGNLIR (99 aa). Positions 237 to 246 are enriched in polar residues; the sequence is RRGNGSQSDT. Acidic residues predominate over residues 247–257; it reads SESEENSEQSD. A phosphoserine mark is found at Ser-286 and Ser-289.

The protein belongs to the TDD superfamily. TSR3 family.

The protein resides in the cytoplasm. It localises to the nucleus. It carries out the reaction an N(1)-methylpseudouridine in rRNA + S-adenosyl-L-methionine = N(1)-methyl-N(3)-[(3S)-3-amino-3-carboxypropyl]pseudouridine in rRNA + S-methyl-5'-thioadenosine + H(+). It catalyses the reaction N(1)-methylpseudouridine(1191) in yeast 18S rRNA + S-adenosyl-L-methionine = N(1)-methyl-N(3)-[(3S)-3-amino-3-carboxypropyl]pseudouridine(1191) in yeast 18S rRNA + S-methyl-5'-thioadenosine + H(+). Functionally, aminocarboxypropyltransferase that catalyzes the aminocarboxypropyl transfer on pseudouridine at position 1191 (Psi1191) in 18S rRNA. It constitutes the last step in biosynthesis of the hypermodified N1-methyl-N3-(3-amino-3-carboxypropyl) pseudouridine (m1acp3-Psi) conserved in eukaryotic 18S rRNA. Required for processing 35S pre-rRNA at site D. The protein is 18S rRNA aminocarboxypropyltransferase of Saccharomyces cerevisiae (strain ATCC 204508 / S288c) (Baker's yeast).